Consider the following 116-residue polypeptide: Ribonuclease P protein component (116 aa).

The protein belongs to the RnpA family. In terms of assembly, consists of a catalytic RNA component (M1 or rnpB) and a protein subunit.

It catalyses the reaction Endonucleolytic cleavage of RNA, removing 5'-extranucleotides from tRNA precursor.. Its function is as follows. RNaseP catalyzes the removal of the 5'-leader sequence from pre-tRNA to produce the mature 5'-terminus. It can also cleave other RNA substrates such as 4.5S RNA. The protein component plays an auxiliary but essential role in vivo by binding to the 5'-leader sequence and broadening the substrate specificity of the ribozyme. In Geobacter sp. (strain M21), this protein is Ribonuclease P protein component.